The sequence spans 295 residues: Indole-3-glycerol phosphate synthase (295 aa).

Belongs to the TrpC family.

It carries out the reaction 1-(2-carboxyphenylamino)-1-deoxy-D-ribulose 5-phosphate + H(+) = (1S,2R)-1-C-(indol-3-yl)glycerol 3-phosphate + CO2 + H2O. Its pathway is amino-acid biosynthesis; L-tryptophan biosynthesis; L-tryptophan from chorismate: step 4/5. The sequence is that of Indole-3-glycerol phosphate synthase from Prochlorococcus marinus (strain MIT 9301).